Consider the following 183-residue polypeptide: Large ribosomal subunit protein uL6 (183 aa).

This sequence belongs to the universal ribosomal protein uL6 family. As to quaternary structure, part of the 50S ribosomal subunit.

In terms of biological role, this protein binds to the 23S rRNA, and is important in its secondary structure. It is located near the subunit interface in the base of the L7/L12 stalk, and near the tRNA binding site of the peptidyltransferase center. This Chlamydia trachomatis serovar L2 (strain ATCC VR-902B / DSM 19102 / 434/Bu) protein is Large ribosomal subunit protein uL6.